The chain runs to 564 residues: Isocitrate dehydrogenase kinase/phosphatase (564 aa).

Residues 315-321 and K336 each bind ATP; that span reads APGVKGM. Residue D371 is part of the active site.

This sequence belongs to the AceK family.

The protein localises to the cytoplasm. It catalyses the reaction L-seryl-[isocitrate dehydrogenase] + ATP = O-phospho-L-seryl-[isocitrate dehydrogenase] + ADP + H(+). Functionally, bifunctional enzyme which can phosphorylate or dephosphorylate isocitrate dehydrogenase (IDH) on a specific serine residue. This is a regulatory mechanism which enables bacteria to bypass the Krebs cycle via the glyoxylate shunt in response to the source of carbon. When bacteria are grown on glucose, IDH is fully active and unphosphorylated, but when grown on acetate or ethanol, the activity of IDH declines drastically concomitant with its phosphorylation. In Idiomarina loihiensis (strain ATCC BAA-735 / DSM 15497 / L2-TR), this protein is Isocitrate dehydrogenase kinase/phosphatase.